The primary structure comprises 178 residues: ATP synthase subunit delta (178 aa).

It belongs to the ATPase delta chain family. In terms of assembly, F-type ATPases have 2 components, F(1) - the catalytic core - and F(0) - the membrane proton channel. F(1) has five subunits: alpha(3), beta(3), gamma(1), delta(1), epsilon(1). F(0) has three main subunits: a(1), b(2) and c(10-14). The alpha and beta chains form an alternating ring which encloses part of the gamma chain. F(1) is attached to F(0) by a central stalk formed by the gamma and epsilon chains, while a peripheral stalk is formed by the delta and b chains.

The protein localises to the cell membrane. In terms of biological role, f(1)F(0) ATP synthase produces ATP from ADP in the presence of a proton or sodium gradient. F-type ATPases consist of two structural domains, F(1) containing the extramembraneous catalytic core and F(0) containing the membrane proton channel, linked together by a central stalk and a peripheral stalk. During catalysis, ATP synthesis in the catalytic domain of F(1) is coupled via a rotary mechanism of the central stalk subunits to proton translocation. Functionally, this protein is part of the stalk that links CF(0) to CF(1). It either transmits conformational changes from CF(0) to CF(1) or is implicated in proton conduction. The protein is ATP synthase subunit delta of Streptococcus pyogenes serotype M1.